Consider the following 295-residue polypeptide: MLDRIKIALQHLLPKRWLTELAGWGAERRGGWLTRGVITLFVRWYKVDMQEAQQPDVATYPTFNAFFVRPLRDEARPIDADPAVLVLPADGIISQLGPIEGEQVFQAKGHHYSLEALLAGNESMITRFRDGSFATTYLAPRDYHRVHMPCNGVLREMLYVPGELFSVNPLTAANIPNLFARNERIICLFDTDFGPMAQILVGATIVGSIETVWAGTVTPPREGIIKRWRYPQADADGAVVLLKGQEMGRFKLGSTVINLFAGKNVLLGEHLYTRYVTRVGQRLAHGIAQTDSPLT.

Active-site charge relay system; for autoendoproteolytic cleavage activity residues include Asp90, His147, and Ser254. Ser254 functions as the Schiff-base intermediate with substrate; via pyruvic acid; for decarboxylase activity in the catalytic mechanism. The residue at position 254 (Ser254) is a Pyruvic acid (Ser); by autocatalysis.

This sequence belongs to the phosphatidylserine decarboxylase family. PSD-B subfamily. Prokaryotic type I sub-subfamily. As to quaternary structure, heterodimer of a large membrane-associated beta subunit and a small pyruvoyl-containing alpha subunit. The cofactor is pyruvate. Is synthesized initially as an inactive proenzyme. Formation of the active enzyme involves a self-maturation process in which the active site pyruvoyl group is generated from an internal serine residue via an autocatalytic post-translational modification. Two non-identical subunits are generated from the proenzyme in this reaction, and the pyruvate is formed at the N-terminus of the alpha chain, which is derived from the carboxyl end of the proenzyme. The autoendoproteolytic cleavage occurs by a canonical serine protease mechanism, in which the side chain hydroxyl group of the serine supplies its oxygen atom to form the C-terminus of the beta chain, while the remainder of the serine residue undergoes an oxidative deamination to produce ammonia and the pyruvoyl prosthetic group on the alpha chain. During this reaction, the Ser that is part of the protease active site of the proenzyme becomes the pyruvoyl prosthetic group, which constitutes an essential element of the active site of the mature decarboxylase.

It is found in the cell membrane. The enzyme catalyses a 1,2-diacyl-sn-glycero-3-phospho-L-serine + H(+) = a 1,2-diacyl-sn-glycero-3-phosphoethanolamine + CO2. The protein operates within phospholipid metabolism; phosphatidylethanolamine biosynthesis; phosphatidylethanolamine from CDP-diacylglycerol: step 2/2. Catalyzes the formation of phosphatidylethanolamine (PtdEtn) from phosphatidylserine (PtdSer). In Sodalis glossinidius (strain morsitans), this protein is Phosphatidylserine decarboxylase proenzyme.